Reading from the N-terminus, the 63-residue chain is MGCGNSTATSAAAGRGPTGAVKDTTEDSITEDDKRRNYGGVYVGLPSEAVNMASSQTKTVQKN.

Over residues 1-10 (MGCGNSTATS) the composition is skewed to polar residues. Residues 1 to 39 (MGCGNSTATSAAAGRGPTGAVKDTTEDSITEDDKRRNYG) are disordered.

It belongs to the OCC1 family.

This Mus musculus (Mouse) protein is Overexpressed in colon carcinoma 1 protein homolog.